The following is a 78-amino-acid chain: Antitoxin VapB27 (78 aa).

Residues 1 to 45 (MKAVVDAAGRIVVPKPLREALGLQPGSTVEISRYGAGLHLIPTGR) enclose the SpoVT-AbrB domain.

Belongs to the VapB family. As to quaternary structure, interacts with cognate toxin VapC27 and non-cognate toxins MazF6 and VapC40. Interaction with MazF6 and MazF9 partially neutralizes the toxins.

Antitoxin component of a type II toxin-antitoxin (TA) system. Cognate toxin is VapC27. Upon expression in E.coli partially counteracts the ribonuclease activity of non-cognate toxins MazF6 and MazF9. This chain is Antitoxin VapB27 (vapB27), found in Mycobacterium tuberculosis (strain ATCC 25618 / H37Rv).